A 1497-amino-acid chain; its full sequence is MALRVKTNKKPCWEMTKEELTSGKTEVFNYEELLEFAEGDIGKVFGPEFAPIDKYSRRVRLPAREYLLVTRVTLMDAEPNNYRVGARMVTEYDLPVNGELSEGGDCPWAVLVESGQCDLMLISYMGIDFQCQGDRVYRLLNTTLTFYGVAHEGETLEYDIRVTGFAKRLDGGISMFFFEYDCYVNGRLLIEMRDGCAGFFTNEELAAGKGVVFTRADLAARAKVAKQDISPYAVAPCLHKTTLSEKEMQTLVDKDWASVFGSKNGMPEINYKLCARKMLMIDRVPKIDHTGGIYGLGLIVGEKILERDHWYFPCHFVKDEVMAGSLVSDGCSQMLKMYMIWLGLHLTTGPFDFRPVSGHPNKVRCRGQISPHKGKLVYVMEIKEIGFDEKNDPYAIADVNIIDIDYEKGQTFEMSRLGDYGKGDLNKKIVVDFKGIALKMQKRSTSTEEPSKVVPVFAKGQATVGTEASRAPGAATAYSPDVLAPAPVALPKNLLKGDPLAPREMTWHPMARIPGNPTPSFAPSAYAPRNIAFTPFPGNPLDNDHTPGKMPLTWFNMAEFMAGKVSQCLGPEFTKFDNSNTSRSPAWDLALVTRAVSVTDMEHVKWRNIDCNPSKGTMIGEFDCPADAWFYKGAANDGHMPYSILMEIALQTSGVLTSVLKAPLTMEKDDILFRNLDANADFVRADVDFRGKTIRNITKCTGYSMLGEMGVHRFSFELSVDDVVFYKGTTSFGWFVPEVFAAQAGLDSGRKSEPWFVEQKVPAGQVVSYDVRPGASGRTSLFANAPSGAQLNRRTNQGQYLDKIDLVSGSGKQGLGYGHGVKAVNPNDWFFACHFWFDSVMPGSLGVESMFQLVEAIAVQDDLAGKHGIANPTITHAPGKISWKYRGQLTPKSKQMDSEVHVTSIEAHDGVVDVVADGYLWADGLRVYQVNNIRVRIASGEPAASSSASSVGSSASAEVAERTRSKAAPQPVASGPAQSINLEQLKTDLLELDAPLYLSQDPTTGQLKKHTDVASGQATIVQPCTLGDLGDRSFMETYGVVAPLYTGAMAKGIASADLVIAAGKRKILGSFGAGGLPMHLVREAVDKIQAALPQGPYAVNLIHSPFDSNLEKGNVDLFLEKGVTVVEASAFMTLTPQVVRYRAAGLSRNADGSVRIRNRIIGKVSRTELAEMFIRPAPEHLLEKLIASGEITQEQAELARRVPVADDIAVEADSGGHTDNRPIHVILPLIINLRNRLHRECGYPASLRVRVGAGGGVGCPQAAAAALSMGAAFIVTGTVNQVCKQSGTCDNVRKALSKASYSDICMAPAADMFEEGVKLQVLKKGTMFPSRANKLYELFCKYDSFESMPPNELERVEKRIFQRALAEVWQETKDFYINRLHNPEKIQRAERDPKLKMSLCFRWYLGLASFWANAGIADRVMDYQVWCGPAIGAFNDFIKGTYLDPEVSGEYPCVVQVNLQILRGACYLRRLNALRNDPRIDLETEDAAFVYEPTGSL.

2 dehydratase (DH) domain regions span residues 271–422 and 797–937; these read YKLC…DYGK and QGQY…RVRI. A compositionally biased stretch (low complexity) spans 944–958; sequence ASSSASSVGSSASAE. The interval 944–977 is disordered; that stretch reads ASSSASSVGSSASAEVAERTRSKAAPQPVASGPA. Positions 1026 to 1470 are enoylreductase (ER) domain; it reads LGDLGDRSFM…ILRGACYLRR (445 aa).

The protein belongs to the thioester dehydratase family. FabA subfamily. As to quaternary structure, component of the polyunsaturated fatty acid synthase complex composed of at least ORF-A, ORF-B and ORF-C.

It functions in the pathway lipid metabolism; fatty acid biosynthesis. Its function is as follows. Polyketide synthase-like protein; part of the polyunsaturated fatty acid synthase composed of the 3 PKS-like subunits A, B and C. While the saturated fatty acids (SFAs) in Thraustochytrium are produced by the conventional fatty acid synthase (FAS) pathway, polyunsaturated fatty acids (PUFAs) including docosahexeanoic acid (DHA) and docosapentaenoic acid (DPA) are synthesized via an anaerobical PKS pathway. PUFA synthase assimilates fatty acyl-CoA, the product of FAS, as the starter unit to synthesize DPA, and this starter unit may be butyryl-CoA, hexanoyl-CoA, or octanoyl-CoA. DPA and DHA biosynthesis seem to differ by the reduction at the N-3 position by PUFA synthase, not the extension of carbon chain. In DHA biosynthesis, PUFA synthase extends the fatty acyl chain from the methyl toward the carboxyl end, and the double bond is formed when the carbon chain is growing, instead of afterward. Therefore, PUFA synthase is unable to transform DPA to DHA, suggesting that DPA is not the precursor of DHA. Moreover, DPA molecule is partly extended by FAS KS domain, so DPA biosynthesis is less dependent on PUFA synthase KS domain than DHA. The chain is Polyunsaturated fatty acid synthase subunit C from Thraustochytrium sp. (strain ATCC 26185 / S-3).